The following is a 114-amino-acid chain: Large ribosomal subunit protein bL19 (114 aa).

This sequence belongs to the bacterial ribosomal protein bL19 family.

In terms of biological role, this protein is located at the 30S-50S ribosomal subunit interface and may play a role in the structure and function of the aminoacyl-tRNA binding site. The polypeptide is Large ribosomal subunit protein bL19 (Thermobifida fusca (strain YX)).